Consider the following 502-residue polypeptide: Ribose import ATP-binding protein RbsA (502 aa).

2 ABC transporter domains span residues 6 to 242 and 253 to 496; these read IDMT…IARD and ALGA…SGAR. 38-45 lines the ATP pocket; it reads GQNGAGKS.

Belongs to the ABC transporter superfamily. Ribose importer (TC 3.A.1.2.1) family. The complex is composed of an ATP-binding protein (RbsA), two transmembrane proteins (RbsC) and a solute-binding protein (RbsB).

The protein resides in the cell inner membrane. The enzyme catalyses D-ribose(out) + ATP + H2O = D-ribose(in) + ADP + phosphate + H(+). Its function is as follows. Part of the ABC transporter complex RbsABC involved in ribose import. Responsible for energy coupling to the transport system. This is Ribose import ATP-binding protein RbsA from Cereibacter sphaeroides (strain ATCC 17023 / DSM 158 / JCM 6121 / CCUG 31486 / LMG 2827 / NBRC 12203 / NCIMB 8253 / ATH 2.4.1.) (Rhodobacter sphaeroides).